Reading from the N-terminus, the 138-residue chain is Small ribosomal subunit protein uS11c (138 aa).

Positions 1–22 (MAKAIPKISSRRNGRISSRKGA) are disordered. Positions 9 to 22 (SSRRNGRISSRKGA) are enriched in basic residues.

It belongs to the universal ribosomal protein uS11 family. As to quaternary structure, part of the 30S ribosomal subunit.

It localises to the plastid. Its subcellular location is the chloroplast. This chain is Small ribosomal subunit protein uS11c, found in Solanum bulbocastanum (Wild potato).